Here is a 1444-residue protein sequence, read N- to C-terminus: Probable serine/threonine-protein kinase irlC (1444 aa).

The disordered stretch occupies residues 335–370; that stretch reads TLINNNNNNNNNNNNNNNNNNNNNNNNNNNNNNNSK. Over residues 338-368 the composition is skewed to low complexity; sequence NNNNNNNNNNNNNNNNNNNNNNNNNNNNNNN. An SWIM-type zinc finger spans residues 495–529; that stretch reads FTFYLSFGEIFTCSCEDYKREFSCKHMFFILLNYY. Low complexity predominate over residues 584 to 613; that stretch reads TSPFQSINNNNNNNLNNNNNNNLNNNNNNE. 2 disordered regions span residues 584–619 and 864–938; these read TSPF…NKFK and QKEK…ITPI. Coiled-coil stretches lie at residues 593-620 and 847-879; these read NNNN…KFKE and IKAE…KSKI. Over residues 864–876 the composition is skewed to basic residues; that stretch reads QKEKKKQKQKQSK. The segment covering 885–937 has biased composition (low complexity); that stretch reads SSSSSSSSSPSTSNTTITSTTPTTTTTTTTTTTPTTTTTTTTTSSPKQKPITP. Residues 981–1246 form the Protein kinase domain; sequence RKEENVLGRG…IEKILLHPFF (266 aa). Residues 987–995 and K1010 each bind ATP; that span reads LGRGSNGTL. The active-site Proton acceptor is D1116. Residues 1279–1444 enclose the KEN domain; sequence NYQEINLKNN…LIYFNDLIIK (166 aa).

This sequence belongs to the protein kinase superfamily. Ser/Thr protein kinase family.

It carries out the reaction L-seryl-[protein] + ATP = O-phospho-L-seryl-[protein] + ADP + H(+). It catalyses the reaction L-threonyl-[protein] + ATP = O-phospho-L-threonyl-[protein] + ADP + H(+). This chain is Probable serine/threonine-protein kinase irlC (irlC), found in Dictyostelium discoideum (Social amoeba).